The sequence spans 360 residues: Mannose-1-phosphate guanylyltransferase catalytic subunit beta (360 aa).

Positions 2–222 are substrate-binding domain; it reads KALILVGGYG…QGFWMDIGQP (221 aa). Aspartate 110 contacts GDP-alpha-D-mannose. A Mg(2+)-binding site is contributed by aspartate 110. Lysine 162 is an active-site residue. Position 218 (aspartate 218) interacts with GDP-alpha-D-mannose. Residue aspartate 218 coordinates Mg(2+). Positions 245 to 360 are hexapeptide repeat domain; that stretch reads CSGPGIVGNV…ESVPEPGIIM (116 aa).

Belongs to the transferase hexapeptide repeat family. As to quaternary structure, component of the GMPPA-GMPPB mannose-1-phosphate guanylyltransferase complex composed of 4 GMPPA subunits and 8 GMPPB subunits; the complex is organized into three layers, a central layer made up of 2 GMPPA dimers sandwiched between two layers each made up of 2 GMPPB dimers. GMPPB catalytic activity is reduced when part of the complex and binding of GDP-alpha-D-Mannose by GMPPA induces allosteric feedback inhibition of GMPPB. Mg(2+) is required as a cofactor. As to expression, expressed in the liver (at protein level).

It is found in the cytoplasm. It catalyses the reaction alpha-D-mannose 1-phosphate + GTP + H(+) = GDP-alpha-D-mannose + diphosphate. It functions in the pathway nucleotide-sugar biosynthesis; GDP-alpha-D-mannose biosynthesis; GDP-alpha-D-mannose from alpha-D-mannose 1-phosphate (GTP route): step 1/1. Enzyme activity is reduced by incorporation into the GMPPA-GMPPB mannose-1-phosphate guanylyltransferase complex. Allosterically inhibited, when part of the GMPPA-GMPPB complex, by GDP-alpha-D-mannose binding to GMPPA. Its function is as follows. Catalytic subunit of the GMPPA-GMPPB mannose-1-phosphate guanylyltransferase complex. Catalyzes the formation of GDP-mannose, an essential precursor of glycan moieties of glycoproteins and glycolipids. Can catalyze the reverse reaction in vitro. Together with GMPPA regulates GDP-alpha-D-mannose levels. The polypeptide is Mannose-1-phosphate guanylyltransferase catalytic subunit beta (Sus scrofa (Pig)).